The primary structure comprises 288 residues: tRNA pseudouridine synthase A (288 aa).

Catalysis depends on Asp-58, which acts as the Nucleophile. Tyr-124 serves as a coordination point for substrate.

It belongs to the tRNA pseudouridine synthase TruA family. As to quaternary structure, homodimer.

It catalyses the reaction uridine(38/39/40) in tRNA = pseudouridine(38/39/40) in tRNA. In terms of biological role, formation of pseudouridine at positions 38, 39 and 40 in the anticodon stem and loop of transfer RNAs. In Corynebacterium diphtheriae (strain ATCC 700971 / NCTC 13129 / Biotype gravis), this protein is tRNA pseudouridine synthase A.